Reading from the N-terminus, the 96-residue chain is Putative septation protein SpoVG (96 aa).

Belongs to the SpoVG family.

Could be involved in septation. The sequence is that of Putative septation protein SpoVG from Phytoplasma australiense.